A 284-amino-acid chain; its full sequence is Serine/threonine-protein phosphatase Pgam5, mitochondrial (284 aa).

The helical transmembrane segment at 8 to 24 (LGVPTATLAVGTLLLGD) threads the bilayer.

Belongs to the phosphoglycerate mutase family. BPG-dependent PGAM subfamily. Interacts with skn-1 isoforms a and c.

The protein resides in the mitochondrion outer membrane. The catalysed reaction is O-phospho-L-seryl-[protein] + H2O = L-seryl-[protein] + phosphate. The enzyme catalyses O-phospho-L-threonyl-[protein] + H2O = L-threonyl-[protein] + phosphate. Displays phosphatase activity for serine/threonine residues. Has apparently no phosphoglycerate mutase activity. This chain is Serine/threonine-protein phosphatase Pgam5, mitochondrial (pgam-5), found in Caenorhabditis elegans.